Consider the following 464-residue polypeptide: GDNF family receptor alpha-2 (464 aa).

The signal sequence occupies residues M1–A21. Disulfide bonds link C40/C93, C47/C53, C63/C78, C95/C105, C161/C222, C168/C174, C185/C200, C195/C241, C224/C229, C251/C323, C258/C264, C275/C293, C285/C347, and C325/C335. Residue N52 is glycosylated (N-linked (GlcNAc...) asparagine). N357 carries an N-linked (GlcNAc...) asparagine glycan. Over residues D360–Q374 the composition is skewed to polar residues. The disordered stretch occupies residues D360–T392. A compositionally biased stretch (low complexity) spans T381–T392. An N-linked (GlcNAc...) asparagine glycan is attached at N413. The GPI-anchor amidated asparagine moiety is linked to residue N440. Positions S441–L464 are cleaved as a propeptide — removed in mature form.

This sequence belongs to the GDNFR family. As to quaternary structure, interacts with NRTN ligand and RET: forms a 2:2:2 ternary complex composed of NRTN ligand, GFRA2 and RET receptor. Also forms a 4:4:4 tetrameric complex composed of 4 copies of NRTN ligand, GFRA2 and RET receptor, which prevents endocytosis of RET. Interacts with SORL1.

The protein resides in the cell membrane. Receptor for neurturin (NRTN), a growth factor that supports the survival of sympathetic neurons. NRTN-binding leads to autophosphorylation and activation of the RET receptor. Also able to mediate GDNF signaling through the RET tyrosine kinase receptor. The sequence is that of GDNF family receptor alpha-2 (GFRA2) from Bos taurus (Bovine).